The sequence spans 501 residues: Serine/threonine protein phosphatase 2A 55 kDa regulatory subunit B beta isoform (501 aa).

The residue at position 1 (M1) is an N-acetylmethionine. WD repeat units lie at residues 34–73 (QEVD…DHGG), 110–151 (EIEE…IKKI), 220–258 (AHDY…QSFN), 269–309 (DLTE…LCDS), and 328–366 (EIIA…GPVA). Residues 439 to 449 (TPARPSRSIGS) show a composition bias toward polar residues. The segment at 439–466 (TPARPSRSIGSMTRVVRRGSESPGTEAN) is disordered. The WD 6 repeat unit spans residues 471-501 (DFTTKLLHMAWHPTENSIACAAANSLYMYYA).

It belongs to the phosphatase 2A regulatory subunit B family. In terms of assembly, PP2A consists of a common heteromeric enzyme, composed of a catalytic subunit (subunits C), a constant regulatory subunit (subunit A), and a variety of regulatory subunits such as subunits B (the R2/B/PR55/B55, R3/B''/PR72/PR130/PR59 and R5/B'/B56 families). Interacts with SIC/RON3. As to expression, expressed ubiquitously.

Its function is as follows. The B regulatory subunit may modulate substrate selectivity and catalytic activity, and may also direct the localization of the catalytic enzyme to a particular subcellular compartment. This Arabidopsis thaliana (Mouse-ear cress) protein is Serine/threonine protein phosphatase 2A 55 kDa regulatory subunit B beta isoform (PP2AB2).